The primary structure comprises 196 residues: Purpurin (196 aa).

The signal sequence occupies residues 1–21 (MKYAQYVFLASIFSAVEYSLA). 3 disulfide bridges follow: Cys24–Cys182, Cys90–Cys196, and Cys142–Cys151.

The protein belongs to the calycin superfamily. Lipocalin family.

Its subcellular location is the secreted. It localises to the extracellular space. The protein resides in the extracellular matrix. It is found in the interphotoreceptor matrix. In terms of biological role, may be involved in the transport of retinol between the photoreceptors and the pigmented epithelium. The sequence is that of Purpurin from Gallus gallus (Chicken).